Consider the following 364-residue polypeptide: Histidinol-phosphate aminotransferase (364 aa).

N6-(pyridoxal phosphate)lysine is present on Lys-220.

This sequence belongs to the class-II pyridoxal-phosphate-dependent aminotransferase family. Histidinol-phosphate aminotransferase subfamily. Homodimer. The cofactor is pyridoxal 5'-phosphate.

The catalysed reaction is L-histidinol phosphate + 2-oxoglutarate = 3-(imidazol-4-yl)-2-oxopropyl phosphate + L-glutamate. The protein operates within amino-acid biosynthesis; L-histidine biosynthesis; L-histidine from 5-phospho-alpha-D-ribose 1-diphosphate: step 7/9. This chain is Histidinol-phosphate aminotransferase, found in Stenotrophomonas maltophilia (strain R551-3).